Consider the following 1089-residue polypeptide: Pentatricopeptide repeat-containing protein MRL1, chloroplastic (1089 aa).

A chloroplast-targeting transit peptide spans 1–72 (MEVTSTTFIS…SIRSPRLVVR (72 aa)). 10 PPR repeats span residues 466-500 (TMST…GMTA), 501-535 (DCKL…GVEA), 536-570 (NLHT…NVKP), 571-605 (DRVV…THPI), 608-642 (DHIS…GIRG), 643-677 (TPEV…DVTP), 678-712 (DEVF…GIRL), 713-747 (GTIS…KLRP), 748-782 (TIST…GLKP), and 783-817 (NTIT…GVSP).

It belongs to the PPR family. P subfamily. As to expression, expressed in stems, leaves and sepals.

It is found in the plastid. The protein localises to the chloroplast. Functionally, regulator of the large subunit (LS) of RuBisCO. Involved either in the processing or in the stabilization of the processed transcript, probably by acting as a barrier to the 5'&gt;3' degradation. The sequence is that of Pentatricopeptide repeat-containing protein MRL1, chloroplastic (MRL1) from Arabidopsis thaliana (Mouse-ear cress).